The chain runs to 631 residues: DNA mismatch repair protein MutL (631 aa).

The protein belongs to the DNA mismatch repair MutL/HexB family.

Functionally, this protein is involved in the repair of mismatches in DNA. It is required for dam-dependent methyl-directed DNA mismatch repair. May act as a 'molecular matchmaker', a protein that promotes the formation of a stable complex between two or more DNA-binding proteins in an ATP-dependent manner without itself being part of a final effector complex. The protein is DNA mismatch repair protein MutL of Lactobacillus acidophilus (strain ATCC 700396 / NCK56 / N2 / NCFM).